The following is a 277-amino-acid chain: Large ribosomal subunit protein uL2 (277 aa).

Disordered stretches follow at residues 37 to 58 (LHSK…GGGH) and 222 to 277 (GVAM…NRRR). The segment covering 268–277 (VRRRKQNRRR) has biased composition (basic residues).

It belongs to the universal ribosomal protein uL2 family. As to quaternary structure, part of the 50S ribosomal subunit. Forms a bridge to the 30S subunit in the 70S ribosome.

In terms of biological role, one of the primary rRNA binding proteins. Required for association of the 30S and 50S subunits to form the 70S ribosome, for tRNA binding and peptide bond formation. It has been suggested to have peptidyltransferase activity; this is somewhat controversial. Makes several contacts with the 16S rRNA in the 70S ribosome. This Parafrankia sp. (strain EAN1pec) protein is Large ribosomal subunit protein uL2.